A 78-amino-acid chain; its full sequence is Short neurotoxin SNTX26 (78 aa).

The N-terminal stretch at methionine 1–threonine 21 is a signal peptide. Disulfide bonds link cysteine 24–cysteine 40, cysteine 33–cysteine 58, cysteine 62–cysteine 70, and cysteine 71–cysteine 76.

Belongs to the three-finger toxin family. Short-chain subfamily. As to expression, expressed by the venom gland.

It localises to the secreted. Functionally, this three-finger toxin binds and inhibits the nicotinic acetylcholine receptor (nAChR). The chain is Short neurotoxin SNTX26 from Ophiophagus hannah (King cobra).